Here is a 100-residue protein sequence, read N- to C-terminus: Urease subunit gamma (100 aa).

Belongs to the urease gamma subunit family. Heterotrimer of UreA (gamma), UreB (beta) and UreC (alpha) subunits. Three heterotrimers associate to form the active enzyme.

It localises to the cytoplasm. It catalyses the reaction urea + 2 H2O + H(+) = hydrogencarbonate + 2 NH4(+). The protein operates within nitrogen metabolism; urea degradation; CO(2) and NH(3) from urea (urease route): step 1/1. The chain is Urease subunit gamma from Magnetococcus marinus (strain ATCC BAA-1437 / JCM 17883 / MC-1).